The sequence spans 178 residues: ATP-dependent protease subunit HslV (178 aa).

Residue T7 is part of the active site. Residues G162, C165, and T168 each coordinate Na(+).

The protein belongs to the peptidase T1B family. HslV subfamily. A double ring-shaped homohexamer of HslV is capped on each side by a ring-shaped HslU homohexamer. The assembly of the HslU/HslV complex is dependent on binding of ATP.

The protein localises to the cytoplasm. It carries out the reaction ATP-dependent cleavage of peptide bonds with broad specificity.. Its activity is regulated as follows. Allosterically activated by HslU binding. Functionally, protease subunit of a proteasome-like degradation complex believed to be a general protein degrading machinery. The polypeptide is ATP-dependent protease subunit HslV (Paraburkholderia xenovorans (strain LB400)).